Here is a 546-residue protein sequence, read N- to C-terminus: Cytochrome P450 monooxygenase fumoB (546 aa).

A helical transmembrane segment spans residues 13–33; that stretch reads LGYYEKLAGILGIIGLVLLFW. Asn-147 carries N-linked (GlcNAc...) asparagine glycosylation. Residue Cys-488 participates in heme binding.

The protein belongs to the cytochrome P450 family. The cofactor is heme.

The protein resides in the membrane. Its pathway is secondary metabolite biosynthesis. Functionally, cytochrome P450 monooxygenase; part of the gene cluster that mediates the biosynthesis of fumosorinone, a 2-pyridone alkaloid that acts as an inhibitor of protein tyrosine phosphatase 1B which is implicated asa negative regulator of insulin receptor signaling and a potential drug target for the treatment of type II diabetes and other associated metabolic syndromes. The polyketide-amino acid backbone of fumosorinone is first assembled by the PKS-NRPS hybrid fumoS. The PKS modules condense one acetyl-CoA starter unit with 7 malonyl-CoA units, programmed C-methylations occurring after the first 3 and the sixth extensions, and cycles of full reduction occurring after the first 2 extensions. Because fumoS lacks a designated enoyl reductase (ER) domain, the required activity is provided the enoyl reductase fumoC. Upon formation of the polyketide backbone on the thiotemplate, the polyketide is transferred to the NRPS module and linked to tyrosine to produce the acyltetramic acid intermediate called prefumosorinone A. The cytochrome P450 monooxygenase fumoA then probably catalyzes an unprecedented oxidative ring expansion of prefumosorinone A to form prefumosorinone B which contains the 2-pyridone core of fumosorinone. The cytochrome P450 monooxygenase fumoB might hydroxylate the nitrogen of prefumosorinone B, but not the acyltetramic acid prefumosorinone A, to form fumosorinone. The polypeptide is Cytochrome P450 monooxygenase fumoB (Cordyceps fumosorosea (strain ARSEF 2679) (Isaria fumosorosea)).